Reading from the N-terminus, the 321-residue chain is Torsin-2A (321 aa).

The signal sequence occupies residues 1 to 26 (MAAATRGCRPWGSLLGLLGLVSAAAA). 93–100 (GWTGTGKS) contributes to the ATP binding site. Asparagine 149 carries N-linked (GlcNAc...) asparagine glycosylation.

This sequence belongs to the ClpA/ClpB family. Torsin subfamily. In terms of assembly, homohexamer. Interacts with TOR1AIP1. Isoform 1 is expressed ubiquitously, except in cardiac and endothelial tissues.

The protein localises to the endoplasmic reticulum lumen. The protein is Torsin-2A (TOR2A) of Homo sapiens (Human).